The primary structure comprises 126 residues: MAAAADLAQIPDVDIDSDGVFKYVLIRVHAVSPPGTPAGESKEIVRGYKWAEYHADIYDKVSGEMQKKGIDCECLGGGRISHQSQDKKIHVYGYSMGYGRAQHSISTEKIKARYPDYSVTWADDGY.

Lysine 22 serves as a coordination point for substrate. Residue histidine 54 is the Proton acceptor of the active site. 95 to 97 (SMG) lines the substrate pocket.

It belongs to the janus family. Monomer.

It localises to the cytoplasm. The catalysed reaction is N(pros)-phospho-L-histidyl-[protein] + H2O = L-histidyl-[protein] + phosphate. It catalyses the reaction N(tele)-phospho-L-histidyl-[protein] + H2O = L-histidyl-[protein] + phosphate. Exhibits phosphohistidine phosphatase activity. This is 14 kDa phosphohistidine phosphatase (PHPT1) from Sus scrofa (Pig).